Here is an 84-residue protein sequence, read N- to C-terminus: Translational regulator CsrA (84 aa).

It belongs to the CsrA/RsmA family. As to quaternary structure, homodimer; the beta-strands of each monomer intercalate to form a hydrophobic core, while the alpha-helices form wings that extend away from the core.

The protein localises to the cytoplasm. A translational regulator that binds mRNA to regulate translation initiation and/or mRNA stability. Usually binds in the 5'-UTR at or near the Shine-Dalgarno sequence preventing ribosome-binding, thus repressing translation. Its main target seems to be the major flagellin gene, while its function is anatagonized by FliW. In Leptospira borgpetersenii serovar Hardjo-bovis (strain JB197), this protein is Translational regulator CsrA.